Reading from the N-terminus, the 179-residue chain is Large ribosomal subunit protein uL5 (179 aa).

The protein belongs to the universal ribosomal protein uL5 family. In terms of assembly, part of the 50S ribosomal subunit; part of the 5S rRNA/L5/L18/L25 subcomplex. Contacts the 5S rRNA and the P site tRNA. Forms a bridge to the 30S subunit in the 70S ribosome.

Functionally, this is one of the proteins that bind and probably mediate the attachment of the 5S RNA into the large ribosomal subunit, where it forms part of the central protuberance. In the 70S ribosome it contacts protein S13 of the 30S subunit (bridge B1b), connecting the 2 subunits; this bridge is implicated in subunit movement. Contacts the P site tRNA; the 5S rRNA and some of its associated proteins might help stabilize positioning of ribosome-bound tRNAs. The polypeptide is Large ribosomal subunit protein uL5 (Verminephrobacter eiseniae (strain EF01-2)).